The following is a 217-amino-acid chain: Replication-associated protein A (217 aa).

Residues 1-17 show a composition bias toward low complexity; the sequence is MRAPASSAASNRPGPSN. The tract at residues 1–22 is disordered; that stretch reads MRAPASSAASNRPGPSNHPTPR. The region spanning 22–125 is the CRESS-DNA virus Rep endonuclease domain; sequence RWNSKQFFLT…NGDSDEMGEL (104 aa). The short motif at 29–32 is the RCR-1 element; it reads FLTY. Residues Glu-63, His-71, and His-73 each contribute to the a divalent metal cation site. The short motif at 71–73 is the RCR-2 element; sequence HLH. The For DNA cleavage activity role is filled by Tyr-111. The RCR-3 signature appears at 111 to 114; the sequence is YISK. The segment at 176-188 is oligomerization; the sequence is SAAALFTEPPPVY.

It belongs to the geminiviridae Rep protein family. In terms of assembly, homooligomer. Part of the C- and V-complexes which are RepA-Rep-DNA complexes involved in the c-sense and v-sense transcription.

The protein resides in the host nucleus. It is found in the host cytoplasm. Its function is as follows. Implicated in enhancement of V-sense gene expression. Acts a an inhibitor of C-sense gene transcription. The protein is Replication-associated protein A of Miscanthus sacchariflorus (MiSV).